The chain runs to 209 residues: Ribosomal RNA small subunit methyltransferase G (209 aa).

3 residues coordinate S-adenosyl-L-methionine: Gly-74, Phe-79, and Arg-139.

This sequence belongs to the methyltransferase superfamily. RNA methyltransferase RsmG family.

The protein localises to the cytoplasm. It catalyses the reaction guanosine(527) in 16S rRNA + S-adenosyl-L-methionine = N(7)-methylguanosine(527) in 16S rRNA + S-adenosyl-L-homocysteine. Its function is as follows. Specifically methylates the N7 position of guanine in position 527 of 16S rRNA. This Halorhodospira halophila (strain DSM 244 / SL1) (Ectothiorhodospira halophila (strain DSM 244 / SL1)) protein is Ribosomal RNA small subunit methyltransferase G.